The primary structure comprises 149 residues: Calmodulin (149 aa).

A2 carries the N-acetylalanine modification. EF-hand domains lie at 8–43 (EQIA…LGQN), 44–79 (PTEA…KMKD), 81–116 (DSEE…LGEK), and 117–149 (LTDE…MTAK). 15 residues coordinate Ca(2+): D21, D23, D25, T27, E32, D57, D59, N61, T63, E68, D94, D96, N98, Y100, and E105. K116 carries the N6,N6,N6-trimethyllysine modification. Ca(2+) is bound by residues D130, D132, D134, Q136, and E141.

The protein belongs to the calmodulin family.

Calmodulin acts as part of a calcium signal transduction pathway by mediating the control of a large number of enzymes, ion channels, aquaporins and other proteins through calcium-binding. Calcium-binding is required for the activation of calmodulin. Among the enzymes to be stimulated by the calmodulin-calcium complex are a number of protein kinases, such as myosin light-chain kinases and calmodulin-dependent protein kinase type II (CaMK2), and phosphatases. The chain is Calmodulin (calm) from Epinephelus akaara (Hong Kong grouper).